A 148-amino-acid chain; its full sequence is uncharacterized protein (148 aa).

The span at 36-45 shows a compositional bias: low complexity; the sequence is PGAPSAGPMS. The interval 36 to 148 is disordered; the sequence is PGAPSAGPMS…SGTAFFPGTT (113 aa). Positions 46–55 are enriched in polar residues; that stretch reads DSNSKGSTPR.

This is an uncharacterized protein from Bovine leukemia virus (isolate Japanese BLV-1) (BLV).